The primary structure comprises 236 residues: Protein YIPF6 (236 aa).

Alanine 2 is subject to N-acetylalanine. Over 2 to 84 (AEAEESPGDP…HVLYPRKSNT (83 aa)) the chain is Cytoplasmic. At serine 7 the chain carries Phosphoserine. Residues 85–105 (LLRDWDLWGPLILCVTLALML) traverse the membrane as a helical segment. Residues 106-115 (QRDSADSEKD) lie on the Lumenal side of the membrane. A helical transmembrane segment spans residues 116 to 136 (GGPQFAEVFVIVWFGAVTITL). The Cytoplasmic segment spans residues 137–146 (NSKLLGGNIS). The chain crosses the membrane as a helical span at residues 147 to 167 (FFQSLCVLGYCILPLTVAMLI). Residues 168–184 (CRLVLLADPGPVNFMVR) are Lumenal-facing. Residues 185 to 205 (LFVVIVMFAWSIVASTAFLAD) traverse the membrane as a helical segment. The Cytoplasmic portion of the chain corresponds to 206–212 (SQPPNRR). Residues 213–233 (ALAVYPVFLFYFVISWMILTF) form a helical membrane-spanning segment. The Lumenal portion of the chain corresponds to 234–236 (TPQ).

Belongs to the YIP1 family. As to quaternary structure, predominantly interacts with YIPF1 or YIPF2, but may also form a ternary complex with YIPF1 and YIPF2. This interaction may stabilize YIPF1 and YIPF2.

Its subcellular location is the golgi apparatus membrane. Its function is as follows. May be required for stable YIPF1 and YIPF2 protein expression. The chain is Protein YIPF6 (YIPF6) from Homo sapiens (Human).